Reading from the N-terminus, the 216-residue chain is Pyridoxine/pyridoxamine 5'-phosphate oxidase (216 aa).

Substrate-binding positions include 12-15 (RKSY) and Lys-70. FMN contacts are provided by residues 65 to 70 (RVVLVK), 80 to 81 (FT), Arg-86, and Lys-87. Positions 127, 131, and 135 each coordinate substrate. FMN is bound by residues 144 to 145 (QS) and Trp-188. A substrate-binding site is contributed by 194–196 (RLH). Position 198 (Arg-198) interacts with FMN.

Belongs to the pyridoxamine 5'-phosphate oxidase family. Homodimer. The cofactor is FMN.

The catalysed reaction is pyridoxamine 5'-phosphate + O2 + H2O = pyridoxal 5'-phosphate + H2O2 + NH4(+). It carries out the reaction pyridoxine 5'-phosphate + O2 = pyridoxal 5'-phosphate + H2O2. It participates in cofactor metabolism; pyridoxal 5'-phosphate salvage; pyridoxal 5'-phosphate from pyridoxamine 5'-phosphate: step 1/1. Its pathway is cofactor metabolism; pyridoxal 5'-phosphate salvage; pyridoxal 5'-phosphate from pyridoxine 5'-phosphate: step 1/1. In terms of biological role, catalyzes the oxidation of either pyridoxine 5'-phosphate (PNP) or pyridoxamine 5'-phosphate (PMP) into pyridoxal 5'-phosphate (PLP). This chain is Pyridoxine/pyridoxamine 5'-phosphate oxidase, found in Polaromonas sp. (strain JS666 / ATCC BAA-500).